We begin with the raw amino-acid sequence, 699 residues long: tRNA wybutosine-synthesizing protein 4 (699 aa).

Residues R94, G120, D151, 197 to 198 (DL), and E224 contribute to the S-adenosyl-L-methionine site.

The protein belongs to the methyltransferase superfamily. LCMT family.

The catalysed reaction is 7-[(3S)-3-amino-3-carboxypropyl]wyosine(37) in tRNA(Phe) + S-adenosyl-L-methionine = 7-[(3S)-(3-amino-3-methoxycarbonyl)propyl]wyosine(37) in tRNA(Phe) + S-adenosyl-L-homocysteine. The enzyme catalyses 7-[(3S)-(3-amino-3-methoxycarbonyl)propyl]wyosine(37) in tRNA(Phe) + S-adenosyl-L-methionine + CO2 = wybutosine(37) in tRNA(Phe) + S-adenosyl-L-homocysteine + 2 H(+). It participates in tRNA modification; wybutosine-tRNA(Phe) biosynthesis. Functionally, probable S-adenosyl-L-methionine-dependent methyltransferase that acts as a component of the wybutosine biosynthesis pathway. Wybutosine is a hyper modified guanosine with a tricyclic base found at the 3'-position adjacent to the anticodon of eukaryotic phenylalanine tRNA. May methylate the carboxyl group of leucine residues to form alpha-leucine ester residues. In Eremothecium gossypii (strain ATCC 10895 / CBS 109.51 / FGSC 9923 / NRRL Y-1056) (Yeast), this protein is tRNA wybutosine-synthesizing protein 4 (PPM2).